We begin with the raw amino-acid sequence, 424 residues long: Glycerol-3-phosphate dehydrogenase [NAD(+)] (424 aa).

Residues 79 to 84 (GSGNWG), Phe111, and Phe167 each bind NAD(+). Lys190 contributes to the substrate binding site. Ala223 lines the NAD(+) pocket. Lys283 serves as the catalytic Proton acceptor. 2 residues coordinate NAD(+): Arg348 and Gln377. 348–349 (RN) contacts substrate.

This sequence belongs to the NAD-dependent glycerol-3-phosphate dehydrogenase family.

It catalyses the reaction sn-glycerol 3-phosphate + NAD(+) = dihydroxyacetone phosphate + NADH + H(+). In Eremothecium gossypii (strain ATCC 10895 / CBS 109.51 / FGSC 9923 / NRRL Y-1056) (Yeast), this protein is Glycerol-3-phosphate dehydrogenase [NAD(+)] (GPD).